Reading from the N-terminus, the 446-residue chain is Tubulin beta-3 chain (446 aa).

GTP is bound by residues Gln11, Glu69, Ser138, Gly142, Thr143, Gly144, Asn204, and Asn226. Glu69 contacts Mg(2+). Residues Glu421–Ala446 are disordered. Over residues Thr429 to Ala446 the composition is skewed to acidic residues.

This sequence belongs to the tubulin family. In terms of assembly, dimer of alpha and beta chains. A typical microtubule is a hollow water-filled tube with an outer diameter of 25 nm and an inner diameter of 15 nM. Alpha-beta heterodimers associate head-to-tail to form protofilaments running lengthwise along the microtubule wall with the beta-tubulin subunit facing the microtubule plus end conferring a structural polarity. Microtubules usually have 13 protofilaments but different protofilament numbers can be found in some organisms and specialized cells. The cofactor is Mg(2+). As to expression, expressed in roots, second node, leaf sheaths, and suspension cultured cells.

The protein localises to the cytoplasm. It is found in the cytoskeleton. In terms of biological role, tubulin is the major constituent of microtubules, a cylinder consisting of laterally associated linear protofilaments composed of alpha- and beta-tubulin heterodimers. Microtubules grow by the addition of GTP-tubulin dimers to the microtubule end, where a stabilizing cap forms. Below the cap, tubulin dimers are in GDP-bound state, owing to GTPase activity of alpha-tubulin. This is Tubulin beta-3 chain (TUBB3) from Oryza sativa subsp. japonica (Rice).